Here is a 609-residue protein sequence, read N- to C-terminus: Dihydroxy-acid dehydratase 1 (609 aa).

A Mg(2+)-binding site is contributed by Asp-81. Position 122 (Cys-122) interacts with [2Fe-2S] cluster. Positions 123 and 124 each coordinate Mg(2+). Lys-124 is subject to N6-carboxylysine. Cys-195 serves as a coordination point for [2Fe-2S] cluster. Residue Glu-491 participates in Mg(2+) binding. Ser-517 serves as the catalytic Proton acceptor.

It belongs to the IlvD/Edd family. As to quaternary structure, homodimer. It depends on [2Fe-2S] cluster as a cofactor. Mg(2+) serves as cofactor.

It carries out the reaction (2R)-2,3-dihydroxy-3-methylbutanoate = 3-methyl-2-oxobutanoate + H2O. It catalyses the reaction (2R,3R)-2,3-dihydroxy-3-methylpentanoate = (S)-3-methyl-2-oxopentanoate + H2O. The protein operates within amino-acid biosynthesis; L-isoleucine biosynthesis; L-isoleucine from 2-oxobutanoate: step 3/4. Its pathway is amino-acid biosynthesis; L-valine biosynthesis; L-valine from pyruvate: step 3/4. Functions in the biosynthesis of branched-chain amino acids. Catalyzes the dehydration of (2R,3R)-2,3-dihydroxy-3-methylpentanoate (2,3-dihydroxy-3-methylvalerate) into 2-oxo-3-methylpentanoate (2-oxo-3-methylvalerate) and of (2R)-2,3-dihydroxy-3-methylbutanoate (2,3-dihydroxyisovalerate) into 2-oxo-3-methylbutanoate (2-oxoisovalerate), the penultimate precursor to L-isoleucine and L-valine, respectively. In Acinetobacter baylyi (strain ATCC 33305 / BD413 / ADP1), this protein is Dihydroxy-acid dehydratase 1.